Consider the following 396-residue polypeptide: RNA-binding motif protein, X chromosome (396 aa).

N-acetylmethionine; in Heterogeneous nuclear ribonucleoprotein G; alternate is present on Met-1. The residue at position 2 (Val-2) is an N-acetylvaline; in Heterogeneous nuclear ribonucleoprotein G, N-terminally processed. Residues 8-86 (GKLFIGGLNL…KAIKVAQATK (79 aa)) enclose the RRM domain. Residue Lys-22 forms a Glycyl lysine isopeptide (Lys-Gly) (interchain with G-Cter in SUMO2) linkage. Lys-30 is subject to N6-acetyllysine. Glycyl lysine isopeptide (Lys-Gly) (interchain with G-Cter in SUMO2) cross-links involve residues Lys-80 and Lys-86. The segment at 84–396 (ATKPAFESGR…RGGGGGRSRY (313 aa)) is disordered. Ser-91 carries the post-translational modification Phosphoserine. 4 positions are modified to omega-N-methylarginine: Arg-122, Arg-141, Arg-162, and Arg-170. Residues 148-162 (RGPPPPRRAGPPPKR) show a composition bias toward pro residues. Basic and acidic residues-rich tracts occupy residues 185–205 (RGRDGYEGPPRRDPPPPRRDP) and 241–275 (YTYRDYGHSSARDECPSRGYGDRDGYGGRDRDYAD). Residues 186–236 (GRDGYEGPPRRDPPPPRRDPYLGSREGGYSPRDGYSSRDYSSARDARDFAP) are necessary for the association to nascent RNAPII transcripts and nuclear localization. Residues 323-332 (YGGGRDGYAG) are compositionally biased toward gly residues. Positions 334 to 350 (RSERYSGGRDRVGRADR) are enriched in basic and acidic residues. Phosphoserine is present on residues Ser-335 and Ser-355. The segment at 336-396 (ERYSGGRDRV…RGGGGGRSRY (61 aa)) is necessary for RNA-binding.

Homomultimer. Found in the supraspliceosome complex. Identified in the spliceosome C complex. Forms a complex with ILF2, ILF3, YLPM1, KHDRBS1, NCOA5 and PPP1CA. Interacts with CLK2, KHDRBS2, KHDRBS3, SAFB/SAFB1, TRA2B and YTHDC1. Interacts with ERAP1; the interaction is RNA-independent. Post-translationally, O-glycosylated. Arg-185 is dimethylated, probably to asymmetric dimethylarginine.

Its subcellular location is the nucleus. Its function is as follows. RNA-binding protein that plays several role in the regulation of pre- and post-transcriptional processes. Implicated in tissue-specific regulation of gene transcription and alternative splicing of several pre-mRNAs. Binds to and stimulates transcription from the tumor suppressor TXNIP gene promoter; may thus be involved in tumor suppression. When associated with SAFB, binds to and stimulates transcription from the SREBF1 promoter. Associates with nascent mRNAs transcribed by RNA polymerase II. Component of the supraspliceosome complex that regulates pre-mRNA alternative splice site selection. Can either activate or suppress exon inclusion; acts additively with TRA2B to promote exon 7 inclusion of the survival motor neuron SMN2. Represses the splicing of MAPT/Tau exon 10. Binds preferentially to single-stranded 5'-CC[A/C]-rich RNA sequence motifs localized in a single-stranded conformation; probably binds RNA as a homodimer. Binds non-specifically to pre-mRNAs. Also plays a role in the cytoplasmic TNFR1 trafficking pathways; promotes both the IL-1-beta-mediated inducible proteolytic cleavage of TNFR1 ectodomains and the release of TNFR1 exosome-like vesicles to the extracellular compartment. The polypeptide is RNA-binding motif protein, X chromosome (RBMX) (Bos taurus (Bovine)).